Consider the following 192-residue polypeptide: Endoribonuclease YbeY (192 aa).

Histidine 109, histidine 113, and histidine 119 together coordinate Zn(2+). The disordered stretch occupies residues 142–192 (VGAALREGGPARAAETETSWTRSPTSTSTRSPSGSTARGTRARSSRAGSGR). Residues 159-180 (TSWTRSPTSTSTRSPSGSTARG) are compositionally biased toward low complexity.

Belongs to the endoribonuclease YbeY family. The cofactor is Zn(2+).

The protein resides in the cytoplasm. Functionally, single strand-specific metallo-endoribonuclease involved in late-stage 70S ribosome quality control and in maturation of the 3' terminus of the 16S rRNA. In Anaeromyxobacter sp. (strain Fw109-5), this protein is Endoribonuclease YbeY.